We begin with the raw amino-acid sequence, 338 residues long: 1-aminocyclopropane-1-carboxylate deaminase (338 aa).

K51 is subject to N6-(pyridoxal phosphate)lysine. S78 functions as the Nucleophile in the catalytic mechanism.

It belongs to the ACC deaminase/D-cysteine desulfhydrase family. As to quaternary structure, homotrimer. Requires pyridoxal 5'-phosphate as cofactor.

It catalyses the reaction 1-aminocyclopropane-1-carboxylate + H2O = 2-oxobutanoate + NH4(+). In terms of biological role, catalyzes a cyclopropane ring-opening reaction, the irreversible conversion of 1-aminocyclopropane-1-carboxylate (ACC) to ammonia and alpha-ketobutyrate. Allows growth on ACC as a nitrogen source. This chain is 1-aminocyclopropane-1-carboxylate deaminase, found in Pseudomonas syringae pv. syringae (strain B728a).